Consider the following 122-residue polypeptide: Prefoldin subunit 1 (122 aa).

Ala2 carries the post-translational modification N-acetylalanine.

It belongs to the prefoldin subunit beta family. As to quaternary structure, heterohexamer of two PFD-alpha type and four PFD-beta type subunits.

Functionally, binds specifically to cytosolic chaperonin (c-CPN) and transfers target proteins to it. Binds to nascent polypeptide chain and promotes folding in an environment in which there are many competing pathways for nonnative proteins. This is Prefoldin subunit 1 (PFDN1) from Pongo abelii (Sumatran orangutan).